The primary structure comprises 527 residues: FHA domain-containing protein FhaA (527 aa).

A Phosphothreonine modification is found at T116. Positions F119–Q426 are disordered. The span at R170–G188 shows a compositional bias: basic and acidic residues. Low complexity-rich tracts occupy residues R199–Y209 and Y256–Q266. Pro residues predominate over residues Y271–P283. Residues G284–R299 show a composition bias toward low complexity. Positions Q300–G322 are enriched in gly residues. Over residues R345 to G366 the composition is skewed to low complexity. An FHA domain is found at N455 to V504.

As to quaternary structure, interacts with (phosphorylated) MviN and (phosphorylated) PknB via the FHA domain. Binds to the PknB juxtamembrane domain with an affinity that is modulated by the degree and the pattern of phosphorylation of this juxtamembrane domain. Phosphorylated by PknB.

The protein localises to the cytoplasm. Functionally, regulates cell growth and peptidoglycan synthesis by binding to MviN. May inhibit the late stages of peptidoglycan synthesis. The polypeptide is FHA domain-containing protein FhaA (fhaA) (Mycobacterium tuberculosis (strain ATCC 25618 / H37Rv)).